Consider the following 118-residue polypeptide: Evasin P546 (118 aa).

The first 21 residues, 1–21 (MKVLLYIAASCLMLLALNVSA), serve as a signal peptide directing secretion. 4 disulfide bridges follow: C38-C59, C55-C96, C72-C101, and C91-C110. N-linked (GlcNAc...) asparagine glycosylation is present at N45.

Its subcellular location is the secreted. In terms of biological role, salivary chemokine-binding protein which binds to host chemokines CCL1, CCL3, CCL5 and CCL22. This chain is Evasin P546, found in Amblyomma cajennense (Cayenne tick).